The sequence spans 440 residues: Gap junction gamma-2 protein (440 aa).

At 1–21 (MTNMSWSFLTRLLEEIHNHST) the chain is on the cytoplasmic side. Residues 22–42 (FVGKVWLTVLVVFRIVLTAVG) form a helical membrane-spanning segment. Topologically, residues 43-78 (GESIYSDEQSKFTCNTRQPGCDNVCYDAFAPLSHVR) are extracellular. The chain crosses the membrane as a helical span at residues 79 to 99 (FWVFQIVVISTPSVMYLGYAV). The Cytoplasmic portion of the chain corresponds to 100–223 (HRLARASEQE…AQLVVRAAFE (124 aa)). Residues 108 to 199 (QERRRALRRR…TPGPAGQHDG (92 aa)) are disordered. The span at 112–124 (RALRRRPGPRRLP) shows a compositional bias: basic residues. Positions 150-173 (LEEDEDEEPGAPEGPGEDTEEERT) are enriched in acidic residues. A helical transmembrane segment spans residues 224–244 (VAFLVGQYLLYGFEVPPFFAC). Over 245–264 (SRQPCPHVVDCFVSRPTEKT) the chain is Extracellular. The helical transmembrane segment at 265–285 (VFLLVMYVVSCLCLLLNLCEM) threads the bilayer. The Cytoplasmic portion of the chain corresponds to 286–440 (AHLGLGSAQD…SRDGKATVWI (155 aa)). Residues 368-440 (ADRDSPPCSG…SRDGKATVWI (73 aa)) form a disordered region. Phosphoserine is present on Ser-372. Over residues 380 to 401 (ATSRGPPRAGGPASGTGSATSG) the composition is skewed to low complexity.

The protein belongs to the connexin family. Gamma-type subfamily. In terms of assembly, a connexon is composed of a hexamer of connexins. Interacts with TJP1. Mainly expressed by oligodendrocytes in the central nervous system. Expressed in optic nerve (at protein level).

It localises to the cell membrane. The protein localises to the cell junction. The protein resides in the gap junction. In terms of biological role, one gap junction consists of a cluster of closely packed pairs of transmembrane channels, the connexons, through which materials of low MW diffuse from one cell to a neighboring cell. May play a role in myelination in central and peripheral nervous systems. The protein is Gap junction gamma-2 protein (Gjc2) of Rattus norvegicus (Rat).